Reading from the N-terminus, the 163-residue chain is Nucleotide-binding protein YajQ (163 aa).

It belongs to the YajQ family.

Its function is as follows. Nucleotide-binding protein. In Shigella dysenteriae serotype 1 (strain Sd197), this protein is Nucleotide-binding protein YajQ.